A 3371-amino-acid chain; its full sequence is Protocadherin-23 (3371 aa).

Residues methionine 1–glycine 40 are disordered. Residues methionine 1–serine 46 are Cytoplasmic-facing. A helical transmembrane segment spans residues leucine 47–phenylalanine 67. Cadherin domains follow at residues glutamine 65–phenylalanine 167, proline 168–phenylalanine 296, glutamate 297–isoleucine 413, alanine 424–phenylalanine 539, serine 540–phenylalanine 663, tryptophan 664–phenylalanine 771, asparagine 772–tyrosine 881, glutamate 877–phenylalanine 979, leucine 980–tryptophan 1082, glutamate 1085–phenylalanine 1191, leucine 1192–phenylalanine 1294, proline 1299–asparagine 1415, serine 1404–phenylalanine 1510, glutamine 1511–phenylalanine 1620, phenylalanine 1620–phenylalanine 1724, lysine 1725–phenylalanine 1829, isoleucine 1830–phenylalanine 1933, proline 1934–leucine 2038, glutamate 2039–methionine 2130, serine 2140–phenylalanine 2242, glutamate 2243–phenylalanine 2347, phenylalanine 2347–phenylalanine 2447, serine 2448–phenylalanine 2549, threonine 2550–phenylalanine 2665, serine 2666–phenylalanine 2769, methionine 2770–phenylalanine 2880, and threonine 2881–alanine 2988. Residues asparagine 68–proline 2986 lie on the Extracellular side of the membrane. Residues asparagine 669, asparagine 772, asparagine 814, asparagine 905, asparagine 966, asparagine 1038, asparagine 1172, and asparagine 1275 are each glycosylated (N-linked (GlcNAc...) asparagine). N-linked (GlcNAc...) asparagine glycans are attached at residues asparagine 1487, asparagine 1595, asparagine 1617, and asparagine 1664. The N-linked (GlcNAc...) asparagine glycan is linked to asparagine 1898. Residues asparagine 2054, asparagine 2070, and asparagine 2098 are each glycosylated (N-linked (GlcNAc...) asparagine). N-linked (GlcNAc...) asparagine glycosylation occurs at asparagine 2329. 4 N-linked (GlcNAc...) asparagine glycosylation sites follow: asparagine 2479, asparagine 2497, asparagine 2555, and asparagine 2664. N-linked (GlcNAc...) asparagine glycosylation is found at asparagine 2929 and asparagine 2977. A helical transmembrane segment spans residues leucine 2987 to leucine 3017. Topologically, residues arginine 3018–isoleucine 3371 are cytoplasmic. A compositionally biased stretch (basic and acidic residues) spans lysine 3117–aspartate 3140. The tract at residues lysine 3117–glutamine 3141 is disordered.

As to expression, cerebral cortex and testis.

The protein localises to the membrane. Functionally, calcium-dependent cell-adhesion protein. This Homo sapiens (Human) protein is Protocadherin-23 (DCHS2).